The chain runs to 438 residues: Anthranilate synthase component 1 (438 aa).

Residues S45 and 220 to 222 (PYL) contribute to the L-tryptophan site. Residue 255–256 (GT) participates in chorismate binding. E282 is a Mg(2+) binding site. Residues Y370, R389, 405–407 (GAG), and G407 each bind chorismate. Residue E420 participates in Mg(2+) binding.

This sequence belongs to the anthranilate synthase component I family. In terms of assembly, heterotetramer consisting of two non-identical subunits: a beta subunit (TrpG) and a large alpha subunit (TrpE). Mg(2+) serves as cofactor.

It carries out the reaction chorismate + L-glutamine = anthranilate + pyruvate + L-glutamate + H(+). It participates in amino-acid biosynthesis; L-tryptophan biosynthesis; L-tryptophan from chorismate: step 1/5. Its activity is regulated as follows. Feedback inhibited by tryptophan. In terms of biological role, part of a heterotetrameric complex that catalyzes the two-step biosynthesis of anthranilate, an intermediate in the biosynthesis of L-tryptophan. In the first step, the glutamine-binding beta subunit (TrpG) of anthranilate synthase (AS) provides the glutamine amidotransferase activity which generates ammonia as a substrate that, along with chorismate, is used in the second step, catalyzed by the large alpha subunit of AS (TrpE) to produce anthranilate. In the absence of TrpG, TrpE can synthesize anthranilate directly from chorismate and high concentrations of ammonia. The polypeptide is Anthranilate synthase component 1 (trpE) (Aeropyrum pernix (strain ATCC 700893 / DSM 11879 / JCM 9820 / NBRC 100138 / K1)).